A 162-amino-acid chain; its full sequence is Nucleotide-binding protein Anae109_0095 (162 aa).

The protein belongs to the YajQ family.

In terms of biological role, nucleotide-binding protein. The sequence is that of Nucleotide-binding protein Anae109_0095 from Anaeromyxobacter sp. (strain Fw109-5).